A 102-amino-acid chain; its full sequence is Large ribosomal subunit protein bL21 (102 aa).

This sequence belongs to the bacterial ribosomal protein bL21 family. In terms of assembly, part of the 50S ribosomal subunit. Contacts protein L20.

Functionally, this protein binds to 23S rRNA in the presence of protein L20. This is Large ribosomal subunit protein bL21 from Pelobacter propionicus (strain DSM 2379 / NBRC 103807 / OttBd1).